Reading from the N-terminus, the 353-residue chain is L-tryptophan dehydrogenase (353 aa).

Residue R44 participates in NAD(+) binding. The active-site Proton donor/acceptor is K80. NAD(+)-binding positions include D114, T146, 176–181 (GLGNVG), K204, and 255–257 (AAN).

It belongs to the Glu/Leu/Phe/Val dehydrogenases family. As to quaternary structure, homodimer.

The catalysed reaction is L-tryptophan + NAD(+) + H2O = indole-3-pyruvate + NH4(+) + NADH + H(+). Catalyzes the reversible oxidative deamination of L-tryptophan to indole-3-pyruvate in the presence of NAD(+). Cannot use other L-amino acids and D-Trp. Involved in the biosynthesis of scytonemin, a cyanobacterial radiation-absorbing pigment. The chain is L-tryptophan dehydrogenase from Nostoc punctiforme (strain ATCC 29133 / PCC 73102).